The sequence spans 101 residues: uncharacterized protein (101 aa).

Residues 1–25 (MISIPFRSTMSRTLVFIILPTVLSC) form the signal peptide.

This is an uncharacterized protein from Saccharomyces cerevisiae (strain ATCC 204508 / S288c) (Baker's yeast).